The primary structure comprises 953 residues: Ribonuclease E (953 aa).

Disordered stretches follow at residues 1–23 (MIDG…PDRL) and 118–314 (VAPQ…RRRP). Positions 14-23 (SQHEELPDRL) are enriched in basic and acidic residues. Residues 127–150 (LADDEDVDDGPDYVADDSDADDEG) are compositionally biased toward acidic residues. Residues 157-169 (NRRRRRGRRGRGR) show a composition bias toward basic residues. Positions 183–193 (DQQSEPRAQQF) are enriched in polar residues. The span at 199 to 223 (AETDDGDDRDSEDTEAGDNGEDENG) shows a compositional bias: acidic residues. Positions 230 to 240 (RRRRRRRRRKS) are enriched in basic residues. 2 stretches are compositionally biased toward basic and acidic residues: residues 263 to 272 (VHERVPRAGD) and 294 to 311 (TRLE…DAGR). The 78-residue stretch at 376 to 453 (GNIYLGIVQN…GHKGARLTTQ (78 aa)) folds into the S1 motif domain. Mg(2+)-binding residues include Asp647 and Asp691. Zn(2+) contacts are provided by Cys749 and Cys752. 2 disordered regions span residues 766–808 (SAAA…APGE) and 822–953 (LAGR…IRLD). Over residues 848 to 915 (DLDDTAQADF…DADVDEEDAA (68 aa)) the composition is skewed to acidic residues.

The protein belongs to the RNase E/G family. Assembles into a homotetramer formed by a dimer of dimers. Interacts with DNA-binding protein HU (hupB). Mg(2+) serves as cofactor. The cofactor is Zn(2+).

The protein localises to the cytoplasm. It carries out the reaction Endonucleolytic cleavage of single-stranded RNA in A- and U-rich regions.. In terms of biological role, endoribonuclease that plays a central role in RNA processing and decay. Plays a major role in pre-16S rRNA maturation, probably generating the mature 5'-end, and a minor role in pre-5S and pre-23S rRNA maturation. Probably also processes tRNA. RNase E and HupB jointly contribute to cellular adaptation to changing growth conditions and survival during antibiotic treatment and in the host. This is Ribonuclease E from Mycobacterium tuberculosis (strain ATCC 25618 / H37Rv).